Here is a 265-residue protein sequence, read N- to C-terminus: tRNA pseudouridine synthase A (265 aa).

Catalysis depends on aspartate 52, which acts as the Nucleophile. Position 110 (tyrosine 110) interacts with substrate. A disordered region spans residues 244–265; that stretch reads FYRDGPPARTPGGTTDAEEDEG.

Belongs to the tRNA pseudouridine synthase TruA family. In terms of assembly, homodimer.

It catalyses the reaction uridine(38/39/40) in tRNA = pseudouridine(38/39/40) in tRNA. Formation of pseudouridine at positions 38, 39 and 40 in the anticodon stem and loop of transfer RNAs. This Myxococcus xanthus protein is tRNA pseudouridine synthase A.